A 373-amino-acid chain; its full sequence is Flagellar P-ring protein (373 aa).

The first 26 residues, 1–26, serve as a signal peptide directing secretion; the sequence is MKLFFRFLTLVAVLAMSLADVAPAWA.

This sequence belongs to the FlgI family. The basal body constitutes a major portion of the flagellar organelle and consists of four rings (L,P,S, and M) mounted on a central rod.

The protein localises to the periplasm. It is found in the bacterial flagellum basal body. Assembles around the rod to form the L-ring and probably protects the motor/basal body from shearing forces during rotation. This Rhizobium leguminosarum bv. trifolii (strain WSM2304) protein is Flagellar P-ring protein.